A 380-amino-acid chain; its full sequence is tRNA-specific 2-thiouridylase MnmA (380 aa).

ATP-binding positions include 26–33 (AMSGGVDS) and leucine 52. Cysteine 120 functions as the Nucleophile in the catalytic mechanism. Cysteine 120 and cysteine 217 are joined by a disulfide. Residue glycine 144 coordinates ATP. The tract at residues 166-168 (RDQ) is interaction with tRNA. Cysteine 217 serves as the catalytic Cysteine persulfide intermediate.

The protein belongs to the MnmA/TRMU family.

It localises to the cytoplasm. The catalysed reaction is S-sulfanyl-L-cysteinyl-[protein] + uridine(34) in tRNA + AH2 + ATP = 2-thiouridine(34) in tRNA + L-cysteinyl-[protein] + A + AMP + diphosphate + H(+). Its function is as follows. Catalyzes the 2-thiolation of uridine at the wobble position (U34) of tRNA, leading to the formation of s(2)U34. The polypeptide is tRNA-specific 2-thiouridylase MnmA (Roseobacter denitrificans (strain ATCC 33942 / OCh 114) (Erythrobacter sp. (strain OCh 114))).